The sequence spans 203 residues: MAKEIAKSLLDIEAVTLSPNDLYTWSSGIKSPIYCDNRVTLGYPLVRGAIRDGLINLIKEHFPEVEVISGTATAGIPHAAFIAEKLKLPMNYVRSSNKSHGKQNQIEGAKSEGKKVVVIEDLISTGGSSVTAVEALKLAGAEVLGVVAIFTYGLKKADDTFSNIQLPFYTLSDYNELIEVAENEGKISSEDIQTLVEWRDNLA.

5-phospho-alpha-D-ribose 1-diphosphate-binding positions include Arg-94, Lys-98, His-100, and 120–128; that span reads EDLISTGGS. An orotate-binding site is contributed by Ser-124.

This sequence belongs to the purine/pyrimidine phosphoribosyltransferase family. PyrE subfamily. In terms of assembly, homodimer. The cofactor is Mg(2+).

It carries out the reaction orotidine 5'-phosphate + diphosphate = orotate + 5-phospho-alpha-D-ribose 1-diphosphate. The protein operates within pyrimidine metabolism; UMP biosynthesis via de novo pathway; UMP from orotate: step 1/2. Catalyzes the transfer of a ribosyl phosphate group from 5-phosphoribose 1-diphosphate to orotate, leading to the formation of orotidine monophosphate (OMP). The polypeptide is Orotate phosphoribosyltransferase (Staphylococcus aureus (strain COL)).